We begin with the raw amino-acid sequence, 276 residues long: Probable transposase for insertion sequence element IS702 (276 aa).

The DDE Tnp4 domain occupies 118-256; the sequence is MDVTESPIER…SNQYRNRHRR (139 aa). A divalent metal cation-binding residues include Asp-119, Asp-170, Asp-190, and Glu-234.

This sequence belongs to the transposase 11 family. A divalent metal cation serves as cofactor.

In terms of biological role, involved in the transposition of the insertion sequence. This is Probable transposase for insertion sequence element IS702 from Microchaete diplosiphon (Fremyella diplosiphon).